A 210-amino-acid polypeptide reads, in one-letter code: Imidazoleglycerol-phosphate dehydratase (210 aa).

The protein belongs to the imidazoleglycerol-phosphate dehydratase family.

The protein localises to the cytoplasm. It carries out the reaction D-erythro-1-(imidazol-4-yl)glycerol 3-phosphate = 3-(imidazol-4-yl)-2-oxopropyl phosphate + H2O. It participates in amino-acid biosynthesis; L-histidine biosynthesis; L-histidine from 5-phospho-alpha-D-ribose 1-diphosphate: step 6/9. This chain is Imidazoleglycerol-phosphate dehydratase, found in Mycobacterium leprae (strain Br4923).